The following is a 1342-amino-acid chain: DNA-directed RNA polymerase subunit beta (1342 aa).

Belongs to the RNA polymerase beta chain family. As to quaternary structure, the RNAP catalytic core consists of 2 alpha, 1 beta, 1 beta' and 1 omega subunit. When a sigma factor is associated with the core the holoenzyme is formed, which can initiate transcription.

It catalyses the reaction RNA(n) + a ribonucleoside 5'-triphosphate = RNA(n+1) + diphosphate. DNA-dependent RNA polymerase catalyzes the transcription of DNA into RNA using the four ribonucleoside triphosphates as substrates. The chain is DNA-directed RNA polymerase subunit beta from Proteus mirabilis (strain HI4320).